A 93-amino-acid chain; its full sequence is Large ribosomal subunit protein bL27 (93 aa).

Residues methionine 1–glycine 22 form a disordered region.

Belongs to the bacterial ribosomal protein bL27 family.

The polypeptide is Large ribosomal subunit protein bL27 (Methylobacterium sp. (strain 4-46)).